The chain runs to 417 residues: D-glycerate 2-kinase (417 aa).

Belongs to the glycerate kinase type-1 family. In terms of assembly, homodimer. Mg(2+) serves as cofactor.

The catalysed reaction is (R)-glycerate + ATP = (2R)-2-phosphoglycerate + ADP + H(+). Involved in the degradation of serine via 3-hydroxypyruvate. Catalyzes the ATP-dependent phosphorylation of D-glycerate to 2-phosphoglycerate. The protein is D-glycerate 2-kinase of Thermotoga maritima (strain ATCC 43589 / DSM 3109 / JCM 10099 / NBRC 100826 / MSB8).